We begin with the raw amino-acid sequence, 217 residues long: Large ribosomal subunit protein uL3 (217 aa).

Residues 134–146 show a composition bias toward polar residues; the sequence is GRATHGNSRSHNV. The disordered stretch occupies residues 134–154; that stretch reads GRATHGNSRSHNVPGSIGMAQ. The residue at position 154 (Q154) is an N5-methylglutamine.

This sequence belongs to the universal ribosomal protein uL3 family. Part of the 50S ribosomal subunit. Forms a cluster with proteins L14 and L19. Post-translationally, methylated by PrmB.

One of the primary rRNA binding proteins, it binds directly near the 3'-end of the 23S rRNA, where it nucleates assembly of the 50S subunit. This chain is Large ribosomal subunit protein uL3, found in Burkholderia lata (strain ATCC 17760 / DSM 23089 / LMG 22485 / NCIMB 9086 / R18194 / 383).